The following is a 62-amino-acid chain: UPF0434 protein RHE_CH03977 (62 aa).

It belongs to the UPF0434 family.

This chain is UPF0434 protein RHE_CH03977, found in Rhizobium etli (strain ATCC 51251 / DSM 11541 / JCM 21823 / NBRC 15573 / CFN 42).